The following is a 29-amino-acid chain: Varv peptide A (29 aa).

The cyclopeptide (Gly-Asn) cross-link spans 1 to 29; the sequence is GLPVCGETCVGGTCNTPGCSCSWPVCTRN. Cystine bridges form between C5–C19, C9–C21, and C14–C26.

This is a cyclic peptide.

Functionally, probably participates in a plant defense mechanism. Has cytotoxic activity against a variety of drug-resistant and drug-sensitive human tumor cell lines, and against primary chronic lymphocytic leukemia cells. Has weak cytotoxic activity against primary ovarian carcinoma cells or normal lymphocytes. In Viola arvensis (European field pansy), this protein is Varv peptide A.